Reading from the N-terminus, the 392-residue chain is Selenide, water dikinase 1 (392 aa).

N-acetylserine is present on Ser-2. The active site involves Cys-31. ATP contacts are provided by residues Lys-32, Gly-67–Asp-69, Asp-87, Asp-110, and Gly-161–Thr-164. Asp-69 contributes to the Mg(2+) binding site. Asp-110 contributes to the Mg(2+) binding site. Mg(2+) is bound at residue Asp-265.

It belongs to the selenophosphate synthase 1 family. Class II subfamily. Homodimer. Mg(2+) is required as a cofactor.

The protein localises to the cell membrane. The protein resides in the nucleus membrane. The catalysed reaction is hydrogenselenide + ATP + H2O = selenophosphate + AMP + phosphate + 2 H(+). Its function is as follows. Synthesizes selenophosphate from selenide and ATP. This Mus musculus (Mouse) protein is Selenide, water dikinase 1 (Sephs1).